The sequence spans 258 residues: Acetylglutamate kinase (258 aa).

Residues 44–45 (GG), R66, and N158 each bind substrate. ATP contacts are provided by residues 181-186 (DVSGIL) and 209-211 (IIT).

This sequence belongs to the acetylglutamate kinase family. ArgB subfamily. In terms of assembly, homodimer.

The protein localises to the cytoplasm. It catalyses the reaction N-acetyl-L-glutamate + ATP = N-acetyl-L-glutamyl 5-phosphate + ADP. It participates in amino-acid biosynthesis; L-arginine biosynthesis; N(2)-acetyl-L-ornithine from L-glutamate: step 2/4. Its function is as follows. Catalyzes the ATP-dependent phosphorylation of N-acetyl-L-glutamate. This chain is Acetylglutamate kinase, found in Escherichia coli O157:H7.